We begin with the raw amino-acid sequence, 306 residues long: Axin interactor, dorsalization-associated protein (306 aa).

The stretch at 27-62 (QLVEAIDEYQILARHLQKEAQAQHNNSEFTEEQKKT) forms a coiled coil. Residues 128-138 (NLEFEEDEEEG) are compositionally biased toward acidic residues. The tract at residues 128–153 (NLEFEEDEEEGGAGAGSPDSFPARVP) is disordered. Serine 144 carries the phosphoserine modification. An axin-binding region spans residues 154-221 (GTLLPRLPSE…RKEDTYVHFN (68 aa)). Residues 157–304 (LPRLPSEPGM…LYLHLHQTLH (148 aa)) form the C2 Aida-type domain.

This sequence belongs to the AIDA family. As to quaternary structure, interacts with AXIN1. In terms of tissue distribution, widely expressed in adult tissues, with highest expression in the heart and skeletal muscle.

Acts as a ventralizing factor during embryogenesis. Inhibits axin-mediated JNK activation by binding axin and disrupting axin homodimerization. This in turn antagonizes a Wnt/beta-catenin-independent dorsalization pathway activated by AXIN/JNK-signaling. The sequence is that of Axin interactor, dorsalization-associated protein (AIDA) from Homo sapiens (Human).